Here is a 481-residue protein sequence, read N- to C-terminus: Proline--tRNA ligase (481 aa).

Belongs to the class-II aminoacyl-tRNA synthetase family. ProS type 3 subfamily. As to quaternary structure, homodimer.

Its subcellular location is the cytoplasm. The enzyme catalyses tRNA(Pro) + L-proline + ATP = L-prolyl-tRNA(Pro) + AMP + diphosphate. In terms of biological role, catalyzes the attachment of proline to tRNA(Pro) in a two-step reaction: proline is first activated by ATP to form Pro-AMP and then transferred to the acceptor end of tRNA(Pro). The chain is Proline--tRNA ligase from Chlorobium phaeobacteroides (strain DSM 266 / SMG 266 / 2430).